A 630-amino-acid polypeptide reads, in one-letter code: Prolactin receptor (630 aa).

The first 23 residues, 1–23 (MMTKVGEVLLLLLLPAFVPHTDG), serve as a signal peptide directing secretion. Residues 24–234 (THYSLPGKPT…VKVPEYLHRE (211 aa)) lie on the Extracellular side of the membrane. Fibronectin type-III domains lie at 31 to 128 (KPTE…IVQP) and 130 to 230 (PPEK…VPEY). Intrachain disulfides connect cysteine 37/cysteine 47 and cysteine 76/cysteine 87. 2 N-linked (GlcNAc...) asparagine glycosylation sites follow: asparagine 92 and asparagine 101. 2 residues coordinate Zn(2+): aspartate 212 and histidine 213. Positions 216-220 (WSEWS) match the WSXWS motif motif. The chain crosses the membrane as a helical span at residues 235-258 (KSVWILVLVFSAFILLLLTWLIHM). The Cytoplasmic segment spans residues 259 to 630 (NSHSLKHCML…DTATVFSVHT (372 aa)). The Box 1 motif signature appears at 267–275 (MLPPVPGPK). Residues 339–389 (KSIGSASDSDSGRGSCDSDNLLMDKSGAPKEEQQQQNQEGDQIGKETQGPK) are disordered. A compositionally biased stretch (low complexity) spans 340-357 (SIGSASDSDSGRGSCDSD). Over residues 380–389 (QIGKETQGPK) the composition is skewed to basic and acidic residues.

It belongs to the type I cytokine receptor family. Type 1 subfamily.

Its subcellular location is the membrane. This is a receptor for the anterior pituitary hormone prolactin. The protein is Prolactin receptor (prlr) of Oreochromis niloticus (Nile tilapia).